An 84-amino-acid chain; its full sequence is Exodeoxyribonuclease 7 small subunit (84 aa).

This sequence belongs to the XseB family. As to quaternary structure, heterooligomer composed of large and small subunits.

It is found in the cytoplasm. It catalyses the reaction Exonucleolytic cleavage in either 5'- to 3'- or 3'- to 5'-direction to yield nucleoside 5'-phosphates.. Functionally, bidirectionally degrades single-stranded DNA into large acid-insoluble oligonucleotides, which are then degraded further into small acid-soluble oligonucleotides. The sequence is that of Exodeoxyribonuclease 7 small subunit from Yersinia pseudotuberculosis serotype O:3 (strain YPIII).